Here is a 96-residue protein sequence, read N- to C-terminus: Cystatin (96 aa).

The 44-residue stretch at 22–65 folds into the Cystatin domain; that stretch reads DFIKAALNETGTHAGRKYKVLRSSQQVVAGMKYTFYIVFEDDES. N-linked (GlcNAc...) asparagine glycosylation occurs at asparagine 29.

Belongs to the cystatin family. Interacts with cathepsin L-like peptidase; the interaction results in inhibition of cathepsin L-like peptidase activity. In terms of tissue distribution, salivary gland. Midgut.

Its function is as follows. Cysteine proteinase inhibitor. Inhibits cathepsin L-like peptidase. Increases cell viability following apoptosis induction by staurosporine. Inhibits human cathepsin S (CTSS), human cathepsin L2 (CTSV), human cathepsin L (CTSL), human cathepsin B (CTSB) and papain. Functionally, (Microbial infection) Modulates dengue virus type 2 replication in salivary glands. The chain is Cystatin from Aedes aegypti (Yellowfever mosquito).